Reading from the N-terminus, the 159-residue chain is L-alanine exporter AlaE (159 aa).

4 consecutive transmembrane segments (helical) span residues 17-37 (FAMV…VSGM), 48-68 (LSIP…DYLL), 86-106 (MVAY…AVGA), and 110-130 (QIIT…IVYG).

It belongs to the AlaE exporter family.

It localises to the cell inner membrane. In terms of biological role, exports L-alanine. This chain is L-alanine exporter AlaE, found in Photobacterium profundum (strain SS9).